Here is a 228-residue protein sequence, read N- to C-terminus: Aldehyde dehydrogenase 9 (228 aa).

76–81 provides a ligand contact to NAD(+); that stretch reads GSTETA. Residues glutamate 99 and cysteine 132 contribute to the active site.

It belongs to the aldehyde dehydrogenase family.

The catalysed reaction is an aldehyde + NAD(+) + H2O = a carboxylate + NADH + 2 H(+). The protein operates within alcohol metabolism; ethanol degradation; acetate from ethanol: step 2/2. This chain is Aldehyde dehydrogenase 9 (ALDH9), found in Polyandrocarpa misakiensis (Tunicate).